A 746-amino-acid polypeptide reads, in one-letter code: Stromal interaction molecule 2 (746 aa).

The first 14 residues, 1 to 14 (MLVLGLLVAGAADG), serve as a signal peptide directing secretion. Residues 15–218 (CELVPRHLRG…RPPHNWMKDF (204 aa)) lie on the Extracellular side of the membrane. The EF-hand domain occupies 67–102 (FSLEALQTIHKQMDDDKDGGIEVEESDEFIREDMKY). Residues aspartate 80, aspartate 82, aspartate 84, and glutamate 91 each contribute to the Ca(2+) site. Asparagine 135 is a glycosylation site (N-linked (GlcNAc...) asparagine). The region spanning 136–204 (WTLEDTLQWL…QLKALDVVLF (69 aa)) is the SAM domain. Residues 219 to 235 (ILTVSIVIGVGGCWFAY) form a helical membrane-spanning segment. Residues 236–746 (TQNKTSKEHV…IKSLFKKKSK (511 aa)) lie on the Cytoplasmic side of the membrane. Positions 247 to 394 (KMMKDLESLQ…EKIKKKRSTV (148 aa)) form a coiled coil. The tract at residues 483 to 562 (DLDEDTPPIV…SLPSPDPDIL (80 aa)) is disordered. Phosphoserine is present on serine 523. The segment covering 537–549 (HPSHPRHPHHPQH) has biased composition (basic residues). Serine 609, serine 621, serine 640, serine 650, serine 661, serine 665, serine 680, and serine 697 each carry phosphoserine. Residues 685–746 (SSGIPVPKPR…IKSLFKKKSK (62 aa)) are disordered. Basic and acidic residues predominate over residues 723–732 (DLCHNGEKSK). Over residues 733 to 746 (KPSKIKSLFKKKSK) the composition is skewed to basic residues.

In terms of assembly, oligomer with STIM1. Interacts with ORAI1. In terms of processing, glycosylated. Phosphorylated predominantly on Ser residues. In terms of tissue distribution, expressed in all tissues and tumor cell lines examined.

The protein resides in the endoplasmic reticulum membrane. Plays a role in mediating store-operated Ca(2+) entry (SOCE), a Ca(2+) influx following depletion of intracellular Ca(2+) stores. Functions as a highly sensitive Ca(2+) sensor in the endoplasmic reticulum which activates both store-operated and store-independent Ca(2+)-influx. Regulates basal cytosolic and endoplasmic reticulum Ca(2+) concentrations. Upon mild variations of the endoplasmic reticulum Ca(2+) concentration, translocates from the endoplasmic reticulum to the plasma membrane where it probably activates the Ca(2+) release-activated Ca(2+) (CRAC) channels ORAI1, ORAI2 and ORAI3. May inhibit STIM1-mediated Ca(2+) influx. In Homo sapiens (Human), this protein is Stromal interaction molecule 2 (STIM2).